The primary structure comprises 129 residues: Small ribosomal subunit protein uS8c (129 aa).

Belongs to the universal ribosomal protein uS8 family. Part of the 30S ribosomal subunit.

The protein resides in the plastid. The protein localises to the chloroplast. Its function is as follows. One of the primary rRNA binding proteins, it binds directly to 16S rRNA central domain where it helps coordinate assembly of the platform of the 30S subunit. The chain is Small ribosomal subunit protein uS8c (rps8) from Oltmannsiellopsis viridis (Marine flagellate).